We begin with the raw amino-acid sequence, 111 residues long: uncharacterized protein (111 aa).

4 helical membrane-spanning segments follow: residues 3–23 (WVLVFIAGLLEVVWASSLKHA), 24–44 (DSLLDWIIIFILIAVSFILLI), 54–74 (AAYTVFVGIGTVGTYLTGIVL), and 80–100 (AAQMFFLALLLAGILGMKLFT).

The protein belongs to the drug/metabolite transporter (DMT) superfamily. Small multidrug resistance (SMR) (TC 2.A.7.1) family.

The protein resides in the cell membrane. This is an uncharacterized protein from Bacillus subtilis (strain 168).